We begin with the raw amino-acid sequence, 137 residues long: DNA polymerase III subunit psi (137 aa).

This sequence belongs to the DNA polymerase III psi/HolD chain family. As to quaternary structure, the DNA polymerase III holoenzyme complex contains at least 10 different subunits organized into 3 functionally essential subassemblies: the Pol III core, the beta sliding clamp processivity factor and the clamp-loading complex. The Pol III core (subunits alpha, epsilon and theta) contains the polymerase and the 3'-5' exonuclease proofreading activities. The polymerase is tethered to the template via the dimeric beta sliding clamp processivity factor. The clamp-loading complex (also called gamma complex) assembles the beta sliding clamp onto the primed template and plays a central role in the organization and communication at the replication fork. The clamp-loading complex contains delta, delta', psi and chi, and 3 copies of either or both of two different DnaX proteins, gamma and tau. The DNA replisome complex has a single clamp loader (3 tau and 1 each of delta, delta', psi and chi subunits) which binds 3 Pol III cores (1 core on the leading strand and 2 on the lagging strand) each with a beta sliding clamp dimer. Additional proteins in the replisome are other copies of gamma, psi (this protein) and chi (holC), SSB, DNA helicase and RNA primase. The clamp loader hydrolyzes ATP to assemble the beta processivity factor onto the primed template and plays a central role in the organization and communication at the replication fork. Interacts directly with the chi subunit (holC).

The enzyme catalyses DNA(n) + a 2'-deoxyribonucleoside 5'-triphosphate = DNA(n+1) + diphosphate. Its function is as follows. Part of the beta sliding clamp loading complex, which hydrolyzes ATP to load the beta clamp onto primed DNA to form the DNA replication pre-initiation complex. DNA polymerase III is a complex, multichain enzyme responsible for most of the replicative synthesis in bacteria. This DNA polymerase also exhibits 3' to 5' exonuclease activity. This chain is DNA polymerase III subunit psi, found in Escherichia coli (strain K12).